Here is a 307-residue protein sequence, read N- to C-terminus: Small ribosomal subunit protein uS5m (307 aa).

A mitochondrion-targeting transit peptide spans 1–13; sequence MFKRQLSTSVRYL. Residues 144–208 form the S5 DRBM domain; sequence LTMKPLVMKR…WDAVRNLKEI (65 aa).

It belongs to the universal ribosomal protein uS5 family. As to quaternary structure, component of the mitochondrial small ribosomal subunit (mt-SSU). Mature yeast 74S mitochondrial ribosomes consist of a small (37S) and a large (54S) subunit. The 37S small subunit contains a 15S ribosomal RNA (15S mt-rRNA) and 34 different proteins. The 54S large subunit contains a 21S rRNA (21S mt-rRNA) and 46 different proteins. uS3m, uS4m and uS5m form the narrow entry site of the mRNA channel.

Its subcellular location is the mitochondrion. In terms of biological role, component of the mitochondrial ribosome (mitoribosome), a dedicated translation machinery responsible for the synthesis of mitochondrial genome-encoded proteins, including at least some of the essential transmembrane subunits of the mitochondrial respiratory chain. The mitoribosomes are attached to the mitochondrial inner membrane and translation products are cotranslationally integrated into the membrane. This Saccharomyces cerevisiae (strain ATCC 204508 / S288c) (Baker's yeast) protein is Small ribosomal subunit protein uS5m (MRPS5).